The primary structure comprises 179 residues: Adenine phosphoribosyltransferase (179 aa).

This sequence belongs to the purine/pyrimidine phosphoribosyltransferase family. In terms of assembly, homodimer.

It localises to the cytoplasm. The catalysed reaction is AMP + diphosphate = 5-phospho-alpha-D-ribose 1-diphosphate + adenine. It functions in the pathway purine metabolism; AMP biosynthesis via salvage pathway; AMP from adenine: step 1/1. Catalyzes a salvage reaction resulting in the formation of AMP, that is energically less costly than de novo synthesis. In Jannaschia sp. (strain CCS1), this protein is Adenine phosphoribosyltransferase.